The primary structure comprises 193 residues: LOB domain-containing protein 12 (193 aa).

In terms of domain architecture, LOB spans 7–108 (SPCASCKLLR…MQLAVAQAEI (102 aa)).

Belongs to the LOB domain-containing protein family. In terms of tissue distribution, expressed predominantly in roots, and at low levels in shoots, floral stems and open flowers.

The polypeptide is LOB domain-containing protein 12 (LBD12) (Arabidopsis thaliana (Mouse-ear cress)).